A 690-amino-acid polypeptide reads, in one-letter code: Elongation factor G (690 aa).

The tr-type G domain occupies 8-283 (EDYRNFGIMA…AVVDYLPSPV (276 aa)). Residues 17 to 24 (AHIDAGKT), 81 to 85 (DTPGH), and 135 to 138 (NKMD) each bind GTP.

Belongs to the TRAFAC class translation factor GTPase superfamily. Classic translation factor GTPase family. EF-G/EF-2 subfamily.

It localises to the cytoplasm. Catalyzes the GTP-dependent ribosomal translocation step during translation elongation. During this step, the ribosome changes from the pre-translocational (PRE) to the post-translocational (POST) state as the newly formed A-site-bound peptidyl-tRNA and P-site-bound deacylated tRNA move to the P and E sites, respectively. Catalyzes the coordinated movement of the two tRNA molecules, the mRNA and conformational changes in the ribosome. This is Elongation factor G from Rhodopseudomonas palustris (strain BisB5).